Here is a 373-residue protein sequence, read N- to C-terminus: tRNA-specific 2-thiouridylase MnmA (373 aa).

ATP is bound by residues 7–14 (AMSGGVDS) and Leu33. Cys101 functions as the Nucleophile in the catalytic mechanism. Residues Cys101 and Cys215 are joined by a disulfide bond. Gly125 serves as a coordination point for ATP. An interaction with tRNA region spans residues 165 to 167 (KDQ). Residue Cys215 is the Cysteine persulfide intermediate of the active site.

Belongs to the MnmA/TRMU family.

Its subcellular location is the cytoplasm. The catalysed reaction is S-sulfanyl-L-cysteinyl-[protein] + uridine(34) in tRNA + AH2 + ATP = 2-thiouridine(34) in tRNA + L-cysteinyl-[protein] + A + AMP + diphosphate + H(+). Its function is as follows. Catalyzes the 2-thiolation of uridine at the wobble position (U34) of tRNA, leading to the formation of s(2)U34. In Roseiflexus sp. (strain RS-1), this protein is tRNA-specific 2-thiouridylase MnmA.